The primary structure comprises 128 residues: Cyclic ether formation enzyme gkaZ (128 aa).

The signal sequence occupies residues 1–36 (MTTARALSDGLAYLLACFNAFCIQAHLTSRFSPAFS). Transmembrane regions (helical) follow at residues 61–81 (LRYM…LPGW) and 107–127 (WLLH…AIYV).

It belongs to the cyclic ether formation enzyme xenC family.

It localises to the membrane. It participates in mycotoxin biosynthesis. Cyclic ether formation enzyme; part of the gene cluster that mediates the biosynthesis of GKK1032, fungal natural products containing a macrocyclic para-cyclophane connected to a decahydrofluorene ring system that show potent antitumor activities. Within the pathway, gkaZ functions synergistically with gkaB and gkaX to form the cyclophane. The pathway begins with the PKS-NRPS gkaA which, with the help of the trans-enoyl reductase gkaC, synthesizes the polyketide-tyrosyl acyl thioester product which can be reductively off-loaded by the terminal reductase (R) domain in gkaA. The alpha/beta hydrolase gkaG is then required to catalyze the subsequent Knoevenagel condensation that affords the 3-pyrrolin-2-one ring, whereas the three proteins gkaB, gkaX and gkaZ then function synergistically to form the cyclophane. In Penicillium citrinum, this protein is Cyclic ether formation enzyme gkaZ.